The primary structure comprises 312 residues: Elongation factor Ts (312 aa).

The interval 84-87 is involved in Mg(2+) ion dislocation from EF-Tu; that stretch reads TDFV.

The protein belongs to the EF-Ts family.

It is found in the cytoplasm. Its function is as follows. Associates with the EF-Tu.GDP complex and induces the exchange of GDP to GTP. It remains bound to the aminoacyl-tRNA.EF-Tu.GTP complex up to the GTP hydrolysis stage on the ribosome. This Caulobacter vibrioides (strain ATCC 19089 / CIP 103742 / CB 15) (Caulobacter crescentus) protein is Elongation factor Ts.